Reading from the N-terminus, the 718-residue chain is Ribosomal RNA large subunit methyltransferase K/L (718 aa).

The THUMP domain maps to 44–155 (DAYKVCIYSH…KQYVNVFLCL (112 aa)).

This sequence belongs to the methyltransferase superfamily. RlmKL family.

It is found in the cytoplasm. It carries out the reaction guanosine(2445) in 23S rRNA + S-adenosyl-L-methionine = N(2)-methylguanosine(2445) in 23S rRNA + S-adenosyl-L-homocysteine + H(+). It catalyses the reaction guanosine(2069) in 23S rRNA + S-adenosyl-L-methionine = N(2)-methylguanosine(2069) in 23S rRNA + S-adenosyl-L-homocysteine + H(+). In terms of biological role, specifically methylates the guanine in position 2445 (m2G2445) and the guanine in position 2069 (m7G2069) of 23S rRNA. The sequence is that of Ribosomal RNA large subunit methyltransferase K/L from Francisella philomiragia subsp. philomiragia (strain ATCC 25017 / CCUG 19701 / FSC 153 / O#319-036).